Reading from the N-terminus, the 377-residue chain is Succinyl-diaminopimelate desuccinylase (377 aa).

Position 67 (His67) interacts with Zn(2+). Residue Asp69 is part of the active site. Asp100 contributes to the Zn(2+) binding site. Catalysis depends on Glu134, which acts as the Proton acceptor. Residues Glu135, Glu163, and His349 each coordinate Zn(2+).

It belongs to the peptidase M20A family. DapE subfamily. In terms of assembly, homodimer. It depends on Zn(2+) as a cofactor. Co(2+) is required as a cofactor.

It carries out the reaction N-succinyl-(2S,6S)-2,6-diaminopimelate + H2O = (2S,6S)-2,6-diaminopimelate + succinate. The protein operates within amino-acid biosynthesis; L-lysine biosynthesis via DAP pathway; LL-2,6-diaminopimelate from (S)-tetrahydrodipicolinate (succinylase route): step 3/3. Its function is as follows. Catalyzes the hydrolysis of N-succinyl-L,L-diaminopimelic acid (SDAP), forming succinate and LL-2,6-diaminopimelate (DAP), an intermediate involved in the bacterial biosynthesis of lysine and meso-diaminopimelic acid, an essential component of bacterial cell walls. This is Succinyl-diaminopimelate desuccinylase from Mannheimia succiniciproducens (strain KCTC 0769BP / MBEL55E).